The following is a 147-amino-acid chain: Ribosomal RNA large subunit methyltransferase H (147 aa).

S-adenosyl-L-methionine is bound by residues L64, G96, and 115–120 (FSKMTF).

This sequence belongs to the RNA methyltransferase RlmH family. In terms of assembly, homodimer.

The protein resides in the cytoplasm. The catalysed reaction is pseudouridine(1915) in 23S rRNA + S-adenosyl-L-methionine = N(3)-methylpseudouridine(1915) in 23S rRNA + S-adenosyl-L-homocysteine + H(+). Specifically methylates the pseudouridine at position 1915 (m3Psi1915) in 23S rRNA. The sequence is that of Ribosomal RNA large subunit methyltransferase H from Acholeplasma laidlawii (strain PG-8A).